The following is a 465-amino-acid chain: Hexokinase-4 (465 aa).

Residues Ala10–Ala454 enclose the Hexokinase domain. Residues Glu67–Val203 are hexokinase small subdomain. Asp78 to Asn83 is an ATP binding site. Substrate-binding positions include Ser151 to Phe152, Thr168 to Lys169, and Asn204 to Asp205. The interval Asn204–Glu443 is hexokinase large subdomain. Thr228 lines the ATP pocket. Asn231, Glu256, and Glu290 together coordinate substrate. ATP contacts are provided by residues Gly295–Lys296, Thr332–Ser336, and Ser411–Leu415.

The protein belongs to the hexokinase family. Monomer. Interacts with MIDN; the interaction occurs preferentially at low glucose levels and results in inhibition of hexokinase activity. Interacts with GCKR; leading to sequestration in the nucleus.

Its subcellular location is the cytoplasm. The protein localises to the nucleus. The protein resides in the mitochondrion. It catalyses the reaction a D-hexose + ATP = a D-hexose 6-phosphate + ADP + H(+). The enzyme catalyses D-fructose + ATP = D-fructose 6-phosphate + ADP + H(+). It carries out the reaction D-glucose + ATP = D-glucose 6-phosphate + ADP + H(+). The catalysed reaction is D-mannose + ATP = D-mannose 6-phosphate + ADP + H(+). The protein operates within carbohydrate metabolism; hexose metabolism. Its pathway is carbohydrate degradation; glycolysis; D-glyceraldehyde 3-phosphate and glycerone phosphate from D-glucose: step 1/4. With respect to regulation, subject to allosteric regulation. Low glucose and high fructose-6-phosphate triggers association with the inhibitor GCKR followed by sequestration in the nucleus. In terms of biological role, catalyzes the phosphorylation of hexose, such as D-glucose, D-fructose and D-mannose, to hexose 6-phosphate (D-glucose 6-phosphate, D-fructose 6-phosphate and D-mannose 6-phosphate, respectively). Compared to other hexokinases, has a weak affinity for D-glucose, and is effective only when glucose is abundant. Mainly expressed in pancreatic beta cells and the liver and constitutes a rate-limiting step in glucose metabolism in these tissues. Since insulin secretion parallels glucose metabolism and the low glucose affinity of GCK ensures that it can change its enzymatic activity within the physiological range of glucose concentrations, GCK acts as a glucose sensor in the pancreatic beta cell. In pancreas, plays an important role in modulating insulin secretion. In liver, helps to facilitate the uptake and conversion of glucose by acting as an insulin-sensitive determinant of hepatic glucose usage. Required to provide D-glucose 6-phosphate for the synthesis of glycogen. Mediates the initial step of glycolysis by catalyzing phosphorylation of D-glucose to D-glucose 6-phosphate. The sequence is that of Hexokinase-4 from Mus musculus (Mouse).